Reading from the N-terminus, the 120-residue chain is Seripauperin-8 (120 aa).

Positions 1–20 (MVKLTSIAAGVAAIAATASA) are cleaved as a signal peptide.

It belongs to the SRP1/TIP1 family. Seripauperin subfamily.

The protein is Seripauperin-8 (PAU8) of Saccharomyces cerevisiae (strain ATCC 204508 / S288c) (Baker's yeast).